Consider the following 340-residue polypeptide: Anthranilate phosphoribosyltransferase (340 aa).

5-phospho-alpha-D-ribose 1-diphosphate-binding positions include G79, 82–83 (GD), S87, 89–92 (NIST), 107–115 (KHGNRSVSS), and S119. G79 serves as a coordination point for anthranilate. Residue S91 participates in Mg(2+) binding. N110 serves as a coordination point for anthranilate. R165 provides a ligand contact to anthranilate. The Mg(2+) site is built by D224 and E225.

The protein belongs to the anthranilate phosphoribosyltransferase family. As to quaternary structure, homodimer. Mg(2+) is required as a cofactor.

The enzyme catalyses N-(5-phospho-beta-D-ribosyl)anthranilate + diphosphate = 5-phospho-alpha-D-ribose 1-diphosphate + anthranilate. The protein operates within amino-acid biosynthesis; L-tryptophan biosynthesis; L-tryptophan from chorismate: step 2/5. In terms of biological role, catalyzes the transfer of the phosphoribosyl group of 5-phosphorylribose-1-pyrophosphate (PRPP) to anthranilate to yield N-(5'-phosphoribosyl)-anthranilate (PRA). In Oceanobacillus iheyensis (strain DSM 14371 / CIP 107618 / JCM 11309 / KCTC 3954 / HTE831), this protein is Anthranilate phosphoribosyltransferase.